Here is a 1070-residue protein sequence, read N- to C-terminus: uncharacterized protein (1070 aa).

Disordered regions lie at residues 66–88, 355–388, 423–483, 667–692, and 735–786; these read EKEK…PGLE, DLDF…DFSN, EDDL…EQID, EELK…EETE, and SKTQ…NNNN. Residues 73 to 83 are compositionally biased toward low complexity; sequence NENTSNVNKIK. Basic and acidic residues-rich tracts occupy residues 435–460 and 474–483; these read KKEE…EEYR and MKMHEKEQID. Residues 475-736 adopt a coiled-coil conformation; sequence KMHEKEQIDD…EMRLQLIRSK (262 aa). Polar residues predominate over residues 735-745; that stretch reads SKTQGTSSTFI. The segment covering 751–765 has biased composition (basic and acidic residues); the sequence is KHLESLKEEKKKEVK. Residues 773–786 are compositionally biased toward low complexity; that stretch reads NNNNNNNNNNNNNN.

This is an uncharacterized protein from Plasmodium falciparum (isolate 3D7).